The primary structure comprises 318 residues: MSSSSSRNAFEDGKYKSNLLTLDSSSRCCKITPSSRASPSPPKQLLVATPVEEGDYPVVMLLHGYLLYNSFYSQLMLHVSSHGFILIAPQLYSIAGPDTMDEIKSTAEIMDWLSVGLNHFLPAQVTPNLSKFALSGHSRGGKTAFAVALKKFGYSSNLKISTLIGIDPVDGTGKGKQTPPPVLAYLPNSFDLDKTPILVIGSGLGETARNPLFPPCAPPGVNHREFFRECQGPAWHFVAKDYGHLDMLDDDTKGIRGKSSYCLCKNGEERRPMRRFVGGLVVSFLKAYLEGDDRELVKIKDGCHEDVPVEIQEFEVIM.

The GXSXG signature appears at 136–140 (GHSRG). Ser138 (nucleophile) is an active-site residue. Active-site charge relay system residues include Asp167 and His244.

The protein belongs to the AB hydrolase superfamily. Lipase family. In terms of tissue distribution, expressed in leaves, flowers and flower buds, but not in roots.

The protein resides in the cytoplasm. It localises to the cytosol. It catalyses the reaction a chlorophyll + H2O = a chlorophyllide + phytol + H(+). The catalysed reaction is chlorophyll a + H2O = phytol + chlorophyllide a + H(+). Its pathway is porphyrin-containing compound metabolism; chlorophyll degradation. Catalyzes the hydrolysis of ester bond in chlorophyll to yield chlorophyllide and phytol. Does not seem to be required for chlorophyll degradation during senescence. The chain is Chlorophyllase-2 from Arabidopsis thaliana (Mouse-ear cress).